The following is a 145-amino-acid chain: Aminoglycoside N(6')-acetyltransferase type 1 (145 aa).

The region spanning 1–145 (MDIRQMNRTH…ERVIFYRKRC (145 aa)) is the N-acetyltransferase domain. Tryptophan 22, histidine 25, tyrosine 66, and glutamate 79 together coordinate substrate. Acetyl-CoA contacts are provided by residues 81–83 (IFV) and 89–94 (QRGVAK). Aspartate 115 is a substrate binding site. Residue asparagine 120 participates in acetyl-CoA binding. Glutamate 136 is a binding site for substrate.

In terms of assembly, homodimer.

The enzyme catalyses kanamycin B + acetyl-CoA = N(6')-acetylkanamycin B + CoA + H(+). Catalyzes the transfer of an acetyl group from acetyl-CoA to the 6'-amino group of aminoglycoside molecules conferring resistance to antibiotics containing the purpurosamine ring. This Salmonella typhimurium (strain LT2 / SGSC1412 / ATCC 700720) protein is Aminoglycoside N(6')-acetyltransferase type 1.